Reading from the N-terminus, the 1518-residue chain is Hormone receptor 4 (1518 aa).

Disordered stretches follow at residues Arg-30–Ala-50, Thr-145–Glu-327, Pro-380–Ala-587, Val-672–Ala-820, and Ser-887–Asp-913. Polar residues predominate over residues Asp-34–Pro-46. Composition is skewed to low complexity over residues Thr-145–Gly-189 and Ser-208–Ser-219. Positions Glu-238–Thr-260 are enriched in gly residues. The span at Ser-291–Ala-323 shows a compositional bias: low complexity. The segment covering Gln-400–Gln-429 has biased composition (basic and acidic residues). Polar residues-rich tracts occupy residues Ser-430–His-451 and Arg-475–Met-489. Low complexity-rich tracts occupy residues Gln-490–Leu-529, His-546–Gln-586, Gly-681–Ser-705, and Gly-738–Ser-799. 2 stretches are compositionally biased toward gly residues: residues Ser-800–Gly-812 and Gly-892–Gly-902. A DNA-binding region (nuclear receptor) is located at residues Pro-918 to Glu-993. 2 consecutive NR C4-type zinc fingers follow at residues Cys-921–Cys-941 and Cys-957–Cys-976. Disordered stretches follow at residues Lys-1015–Ala-1101, Leu-1142–His-1210, and Lys-1341–Ile-1371. Residues Gln-1021 to Ser-1060 are compositionally biased toward low complexity. Basic residues predominate over residues Pro-1061–Gln-1077. Composition is skewed to low complexity over residues Gln-1078–Ala-1101 and Gln-1144–Gln-1193. A compositionally biased stretch (gly residues) spans Gln-1194–Ala-1205. The region spanning His-1250–Arg-1518 is the NR LBD domain. The span at His-1351–Ser-1368 shows a compositional bias: low complexity.

This sequence belongs to the nuclear hormone receptor family. NR1 subfamily. During L2 and L3 stages, strong constitutive expression is seen in the ring gland. Lower expression is detected in specific neurons of the central nervous system (CNS) (at protein level).

It localises to the nucleus. Functionally, coordinates growth and maturation by mediating endocrine responses to the attainment of critical weight during larval development. Plays a central role in the genetic cascades triggered by the steroid hormone ecdysone at the onset of metamorphosis, acting as both a repressor of the early ecdysone-induced regulatory genes and an inducer of the ftz-f1 midprepupal competence factor. This chain is Hormone receptor 4 (Hr4), found in Drosophila melanogaster (Fruit fly).